The sequence spans 267 residues: Tryptophan synthase alpha chain (267 aa).

Catalysis depends on proton acceptor residues E47 and D58.

This sequence belongs to the TrpA family. In terms of assembly, tetramer of two alpha and two beta chains.

The enzyme catalyses (1S,2R)-1-C-(indol-3-yl)glycerol 3-phosphate + L-serine = D-glyceraldehyde 3-phosphate + L-tryptophan + H2O. It participates in amino-acid biosynthesis; L-tryptophan biosynthesis; L-tryptophan from chorismate: step 5/5. The alpha subunit is responsible for the aldol cleavage of indoleglycerol phosphate to indole and glyceraldehyde 3-phosphate. The protein is Tryptophan synthase alpha chain of Pelodictyon phaeoclathratiforme (strain DSM 5477 / BU-1).